The primary structure comprises 179 residues: ATP synthase subunit delta (179 aa).

This sequence belongs to the ATPase delta chain family. F-type ATPases have 2 components, F(1) - the catalytic core - and F(0) - the membrane proton channel. F(1) has five subunits: alpha(3), beta(3), gamma(1), delta(1), epsilon(1). F(0) has three main subunits: a(1), b(2) and c(10-14). The alpha and beta chains form an alternating ring which encloses part of the gamma chain. F(1) is attached to F(0) by a central stalk formed by the gamma and epsilon chains, while a peripheral stalk is formed by the delta and b chains.

The protein resides in the cell inner membrane. In terms of biological role, f(1)F(0) ATP synthase produces ATP from ADP in the presence of a proton or sodium gradient. F-type ATPases consist of two structural domains, F(1) containing the extramembraneous catalytic core and F(0) containing the membrane proton channel, linked together by a central stalk and a peripheral stalk. During catalysis, ATP synthesis in the catalytic domain of F(1) is coupled via a rotary mechanism of the central stalk subunits to proton translocation. This protein is part of the stalk that links CF(0) to CF(1). It either transmits conformational changes from CF(0) to CF(1) or is implicated in proton conduction. This Burkholderia multivorans (strain ATCC 17616 / 249) protein is ATP synthase subunit delta.